The following is a 144-amino-acid chain: Probable calcium-binding protein CML31 (144 aa).

EF-hand domains follow at residues 1–31 (MAEI…FSPQ), 32–67 (ITSE…NGGG), 72–107 (EEEV…LGEK), and 108–143 (HTME…NKES). Aspartate 45, aspartate 47, aspartate 49, glutamine 51, glutamate 56, aspartate 85, aspartate 87, aspartate 89, lysine 91, glutamate 96, aspartate 121, aspartate 123, aspartate 125, and glutamate 132 together coordinate Ca(2+).

Potential calcium sensor. In Arabidopsis thaliana (Mouse-ear cress), this protein is Probable calcium-binding protein CML31 (CML31).